Reading from the N-terminus, the 360-residue chain is Phospho-N-acetylmuramoyl-pentapeptide-transferase (360 aa).

10 consecutive transmembrane segments (helical) span residues 25–45 (RAIL…PTLI), 73–93 (TMGG…WADL), 97–117 (YVWV…VDDY), 128–148 (LIAK…AVYL), 168–188 (VMPQ…VGTS), 199–219 (GLAI…AYVS), 236–256 (TAEL…FLWF), 262–282 (LVFM…IIAI), 288–308 (LVLF…MLQV), and 338–358 (VIVR…ATLK).

Belongs to the glycosyltransferase 4 family. MraY subfamily. Mg(2+) serves as cofactor.

The protein resides in the cell inner membrane. The enzyme catalyses UDP-N-acetyl-alpha-D-muramoyl-L-alanyl-gamma-D-glutamyl-meso-2,6-diaminopimeloyl-D-alanyl-D-alanine + di-trans,octa-cis-undecaprenyl phosphate = di-trans,octa-cis-undecaprenyl diphospho-N-acetyl-alpha-D-muramoyl-L-alanyl-D-glutamyl-meso-2,6-diaminopimeloyl-D-alanyl-D-alanine + UMP. It functions in the pathway cell wall biogenesis; peptidoglycan biosynthesis. Its function is as follows. Catalyzes the initial step of the lipid cycle reactions in the biosynthesis of the cell wall peptidoglycan: transfers peptidoglycan precursor phospho-MurNAc-pentapeptide from UDP-MurNAc-pentapeptide onto the lipid carrier undecaprenyl phosphate, yielding undecaprenyl-pyrophosphoryl-MurNAc-pentapeptide, known as lipid I. The sequence is that of Phospho-N-acetylmuramoyl-pentapeptide-transferase from Idiomarina loihiensis (strain ATCC BAA-735 / DSM 15497 / L2-TR).